The sequence spans 405 residues: Envelope glycoprotein M (405 aa).

Residues 1-17 (MKSSKNDTFVYRTWVKT) lie on the Intravirion side of the membrane. The helical transmembrane segment at 18-38 (LVVYFVMFVMSAVVPITAMFP) threads the bilayer. The Virion surface segment spans residues 39–76 (NLGYPCYFNALVDYGALNLTNYNLAHHLTPTLYLEPPE). The chain crosses the membrane as a helical span at residues 77–97 (MFVYITLVFIADCVAFIYYAC). At 98–121 (GEVALIKARKKVSGLTDLSAWVSA) the chain is on the intravirion side. The helical transmembrane segment at 122–142 (VGSPTVLFLAILKLWSIQVFI) threads the bilayer. Over 143–149 (QVLSYKH) the chain is Virion surface. A helical membrane pass occupies residues 150–170 (VFLSAFVYFLHFLASVLHACA). The Intravirion portion of the chain corresponds to 171–192 (CVTRFSPVWVVKAQDNSIPQDT). A helical membrane pass occupies residues 193–215 (FLWWVVFYLKPVVTNLYLGCLAL). The Virion surface segment spans residues 216–245 (ETLVFSLSVFLALGNSFYFMVGDMVLGAVN). The helical transmembrane segment at 246 to 266 (LFLILPIFWYILTEVWLASFL) threads the bilayer. Residue Arg267 is a topological domain, intravirion. Residues 268-288 (HNFGFYCGMFIASIILILPLV) form a helical membrane-spanning segment. Topologically, residues 289–299 (RYEAVFVSAKL) are virion surface. The chain crosses the membrane as a helical span at residues 300-320 (HTTVAINVAIIPILCSVAMLI). The Intravirion portion of the chain corresponds to 321–405 (RICRIFKSMR…TTDSEEEIFP (85 aa)). Positions 346-405 (LESEPRPRPSRTPSPGRNRRRSSTSSSSSRSTRRQRPVSTQALVSSVLPMTTDSEEEIFP) are disordered. The segment covering 386–397 (QALVSSVLPMTT) has biased composition (polar residues).

It belongs to the herpesviridae glycoprotein M family. Interacts (via N-terminus) with gN (via N-terminus). The gM-gN heterodimer forms the gCII complex.

It is found in the virion membrane. The protein resides in the host Golgi apparatus. The protein localises to the host trans-Golgi network. It localises to the host endosome membrane. Its subcellular location is the host nucleus inner membrane. In terms of biological role, envelope glycoprotein important for virion assembly and egress. Plays a role in the correct incorporation of gH-gL into virion membrane. Directs the glycoprotein N (gN) to the host trans-Golgi network. This chain is Envelope glycoprotein M, found in Epstein-Barr virus (strain B95-8) (HHV-4).